Reading from the N-terminus, the 187-residue chain is Peptidyl-tRNA hydrolase (187 aa).

Residue tyrosine 15 participates in tRNA binding. The active-site Proton acceptor is the histidine 20. Positions 64, 66, and 112 each coordinate tRNA.

This sequence belongs to the PTH family. As to quaternary structure, monomer.

It localises to the cytoplasm. It carries out the reaction an N-acyl-L-alpha-aminoacyl-tRNA + H2O = an N-acyl-L-amino acid + a tRNA + H(+). Hydrolyzes ribosome-free peptidyl-tRNAs (with 1 or more amino acids incorporated), which drop off the ribosome during protein synthesis, or as a result of ribosome stalling. Functionally, catalyzes the release of premature peptidyl moieties from peptidyl-tRNA molecules trapped in stalled 50S ribosomal subunits, and thus maintains levels of free tRNAs and 50S ribosomes. This chain is Peptidyl-tRNA hydrolase, found in Phocaeicola vulgatus (strain ATCC 8482 / DSM 1447 / JCM 5826 / CCUG 4940 / NBRC 14291 / NCTC 11154) (Bacteroides vulgatus).